Reading from the N-terminus, the 472-residue chain is 3-isopropylmalate dehydratase large subunit (472 aa).

Cys352, Cys412, and Cys415 together coordinate [4Fe-4S] cluster.

The protein belongs to the aconitase/IPM isomerase family. LeuC type 1 subfamily. As to quaternary structure, heterodimer of LeuC and LeuD. The cofactor is [4Fe-4S] cluster.

It catalyses the reaction (2R,3S)-3-isopropylmalate = (2S)-2-isopropylmalate. It participates in amino-acid biosynthesis; L-leucine biosynthesis; L-leucine from 3-methyl-2-oxobutanoate: step 2/4. In terms of biological role, catalyzes the isomerization between 2-isopropylmalate and 3-isopropylmalate, via the formation of 2-isopropylmaleate. In Roseiflexus castenholzii (strain DSM 13941 / HLO8), this protein is 3-isopropylmalate dehydratase large subunit.